Here is a 147-residue protein sequence, read N- to C-terminus: Probable disulfide formation protein (147 aa).

The helical transmembrane segment at 9-28 threads the bilayer; the sequence is NYSLYFAWLTALIATLGSLY. An intrachain disulfide couples C38 to C41. The next 2 membrane-spanning stretches (helical) occupy residues 43–62 and 69–86; these read YQRV…AYRT and YALP…YQYL. C99 and C106 are joined by a disulfide. A helical transmembrane segment spans residues 115-138; sequence GFITLPFLGMLATLIMSFFLIMAF.

Belongs to the DsbB family. BdbC subfamily.

Its subcellular location is the cell inner membrane. Its function is as follows. Required for disulfide bond formation in some proteins. The chain is Probable disulfide formation protein from Coxiella burnetii (strain CbuG_Q212) (Coxiella burnetii (strain Q212)).